The sequence spans 372 residues: Chaperone protein DnaJ (372 aa).

In terms of domain architecture, J spans 3–68 (NLYEILEVNE…EKRKKYDMYG (66 aa)). The segment at 130 to 212 (GTKKEISYKK…CKGKGYEIER (83 aa)) adopts a CR-type zinc-finger fold. Zn(2+) is bound by residues cysteine 143, cysteine 146, cysteine 160, cysteine 163, cysteine 186, cysteine 189, cysteine 200, and cysteine 203. CXXCXGXG motif repeat units follow at residues 143–150 (CHVCNGDG), 160–167 (CEKCHGTG), 186–193 (CDKCHGEG), and 200–207 (CENCKGKG).

Belongs to the DnaJ family. As to quaternary structure, homodimer. It depends on Zn(2+) as a cofactor.

It is found in the cytoplasm. In terms of biological role, participates actively in the response to hyperosmotic and heat shock by preventing the aggregation of stress-denatured proteins and by disaggregating proteins, also in an autonomous, DnaK-independent fashion. Unfolded proteins bind initially to DnaJ; upon interaction with the DnaJ-bound protein, DnaK hydrolyzes its bound ATP, resulting in the formation of a stable complex. GrpE releases ADP from DnaK; ATP binding to DnaK triggers the release of the substrate protein, thus completing the reaction cycle. Several rounds of ATP-dependent interactions between DnaJ, DnaK and GrpE are required for fully efficient folding. Also involved, together with DnaK and GrpE, in the DNA replication of plasmids through activation of initiation proteins. The protein is Chaperone protein DnaJ of Finegoldia magna (strain ATCC 29328 / DSM 20472 / WAL 2508) (Peptostreptococcus magnus).